The primary structure comprises 51 residues: Large ribosomal subunit protein bL33 (51 aa).

This sequence belongs to the bacterial ribosomal protein bL33 family.

The chain is Large ribosomal subunit protein bL33 from Alteromonas mediterranea (strain DSM 17117 / CIP 110805 / LMG 28347 / Deep ecotype).